Consider the following 762-residue polypeptide: 5-methyltetrahydropteroyltriglutamate--homocysteine methyltransferase (762 aa).

Residues 17–20 (REWK) and K111 each bind 5-methyltetrahydropteroyltri-L-glutamate. Residues 435–437 (IGS) and E488 each bind L-homocysteine. L-methionine-binding positions include 435 to 437 (IGS) and E488. 5-methyltetrahydropteroyltri-L-glutamate-binding positions include 519–520 (RC) and W565. D603 provides a ligand contact to L-homocysteine. D603 serves as a coordination point for L-methionine. E609 is a binding site for 5-methyltetrahydropteroyltri-L-glutamate. Residues H645, C647, and E669 each contribute to the Zn(2+) site. Catalysis depends on H698, which acts as the Proton donor. C730 serves as a coordination point for Zn(2+).

The protein belongs to the vitamin-B12 independent methionine synthase family. Zn(2+) is required as a cofactor.

It catalyses the reaction 5-methyltetrahydropteroyltri-L-glutamate + L-homocysteine = tetrahydropteroyltri-L-glutamate + L-methionine. It functions in the pathway amino-acid biosynthesis; L-methionine biosynthesis via de novo pathway; L-methionine from L-homocysteine (MetE route): step 1/1. Functionally, catalyzes the transfer of a methyl group from 5-methyltetrahydrofolate to homocysteine resulting in methionine formation. The chain is 5-methyltetrahydropteroyltriglutamate--homocysteine methyltransferase from Bacillus cereus (strain AH820).